The chain runs to 434 residues: Glutamyl-tRNA reductase (434 aa).

Substrate contacts are provided by residues 49-52 (TCNR), serine 109, 114-116 (EPQ), and glutamine 120. Catalysis depends on cysteine 50, which acts as the Nucleophile. 189-194 (GAGEMC) is an NADP(+) binding site.

It belongs to the glutamyl-tRNA reductase family. In terms of assembly, homodimer.

The enzyme catalyses (S)-4-amino-5-oxopentanoate + tRNA(Glu) + NADP(+) = L-glutamyl-tRNA(Glu) + NADPH + H(+). It functions in the pathway porphyrin-containing compound metabolism; protoporphyrin-IX biosynthesis; 5-aminolevulinate from L-glutamyl-tRNA(Glu): step 1/2. In terms of biological role, catalyzes the NADPH-dependent reduction of glutamyl-tRNA(Glu) to glutamate 1-semialdehyde (GSA). The chain is Glutamyl-tRNA reductase from Geotalea uraniireducens (strain Rf4) (Geobacter uraniireducens).